A 115-amino-acid chain; its full sequence is MITLHMVVLPFLITLFLLLIIKFLPMNVPDKEKLSPYECGFDPSGSARLPFSMKFFLVAILFILFDLEIILLFPLAWALNSQSHSNAIILASVFVIILTLGLIYEWLKGGLEWTE.

3 helical membrane passes run 1–21 (MITLHMVVLPFLITLFLLLII), 55–75 (FFLVAILFILFDLEIILLFPL), and 87–107 (AIILASVFVIILTLGLIYEWL).

This sequence belongs to the complex I subunit 3 family.

The protein localises to the mitochondrion membrane. The enzyme catalyses a ubiquinone + NADH + 5 H(+)(in) = a ubiquinol + NAD(+) + 4 H(+)(out). Functionally, core subunit of the mitochondrial membrane respiratory chain NADH dehydrogenase (Complex I) that is believed to belong to the minimal assembly required for catalysis. Complex I functions in the transfer of electrons from NADH to the respiratory chain. The immediate electron acceptor for the enzyme is believed to be ubiquinone. This Myxine glutinosa (Atlantic hagfish) protein is NADH-ubiquinone oxidoreductase chain 3 (MT-ND3).